We begin with the raw amino-acid sequence, 58 residues long: Large ribosomal subunit protein uL30 (58 aa).

It belongs to the universal ribosomal protein uL30 family. As to quaternary structure, part of the 50S ribosomal subunit.

The sequence is that of Large ribosomal subunit protein uL30 from Azotobacter vinelandii (strain DJ / ATCC BAA-1303).